A 132-amino-acid polypeptide reads, in one-letter code: MKTLFLAIALFSAVALAEEKSESAELVPGGEAFVVESVNYPEDASANLKQTWKLTTTAGNFIHLECTDIRLFEDKPCGDWALTFDDGGNVTEMCTTSFDHKFTSKTNTLTLTLRTGRDARGFVACKATATKK.

An N-terminal signal peptide occupies residues 1 to 17 (MKTLFLAIALFSAVALA). The CUB domain maps to 22–129 (ESAELVPGGE…RGFVACKATA (108 aa)). 2 disulfide bridges follow: C66-C125 and C77-C94.

Belongs to the venom CUB family. As to expression, expressed by the venom gland (posterior main gland) (at protein level).

Its subcellular location is the secreted. In Platymeris rhadamanthus (Red spot assassin bug), this protein is Venom CUB domain-containing protein 2.